Consider the following 646-residue polypeptide: Phosphomethylpyrimidine synthase (646 aa).

Polar residues predominate over residues 1 to 13 (MNIRSNPDTTRPA). The segment at 1–30 (MNIRSNPDTTRPAVTTGALPSSRKMFSAPD) is disordered. Residues Asn221, Met250, Tyr279, His315, 335–337 (SRG), 376–379 (DGLR), and Glu415 each bind substrate. Zn(2+) is bound at residue His419. Residue Tyr442 coordinates substrate. Residue His483 coordinates Zn(2+). The [4Fe-4S] cluster site is built by Cys563, Cys566, and Cys571.

This sequence belongs to the ThiC family. Homodimer. [4Fe-4S] cluster is required as a cofactor.

It carries out the reaction 5-amino-1-(5-phospho-beta-D-ribosyl)imidazole + S-adenosyl-L-methionine = 4-amino-2-methyl-5-(phosphooxymethyl)pyrimidine + CO + 5'-deoxyadenosine + formate + L-methionine + 3 H(+). Its pathway is cofactor biosynthesis; thiamine diphosphate biosynthesis. Its function is as follows. Catalyzes the synthesis of the hydroxymethylpyrimidine phosphate (HMP-P) moiety of thiamine from aminoimidazole ribotide (AIR) in a radical S-adenosyl-L-methionine (SAM)-dependent reaction. The polypeptide is Phosphomethylpyrimidine synthase (Nitrobacter winogradskyi (strain ATCC 25391 / DSM 10237 / CIP 104748 / NCIMB 11846 / Nb-255)).